Reading from the N-terminus, the 77-residue chain is Translation initiation factor IF-1, chloroplastic (77 aa).

The S1-like domain maps to 1–71 (MKEQKLIHEG…TRGRIIYRLR (71 aa)).

This sequence belongs to the IF-1 family. As to quaternary structure, component of the 30S ribosomal translation pre-initiation complex which assembles on the 30S ribosome in the order IF-2 and IF-3, IF-1 and N-formylmethionyl-tRNA(fMet); mRNA recruitment can occur at any time during PIC assembly.

The protein localises to the plastid. It is found in the chloroplast. In terms of biological role, one of the essential components for the initiation of protein synthesis. Stabilizes the binding of IF-2 and IF-3 on the 30S subunit to which N-formylmethionyl-tRNA(fMet) subsequently binds. Helps modulate mRNA selection, yielding the 30S pre-initiation complex (PIC). Upon addition of the 50S ribosomal subunit IF-1, IF-2 and IF-3 are released leaving the mature 70S translation initiation complex. This chain is Translation initiation factor IF-1, chloroplastic, found in Acorus calamus var. americanus (American sweet flag).